Reading from the N-terminus, the 881-residue chain is Serine/threonine-protein kinase greatwall (881 aa).

The interval 1–20 (MSTVEPLSDEGVAAGPRRIE) is disordered. The region spanning 30 to 837 (FTIVKPISRG…LKELKHHPLF (808 aa)) is the Protein kinase domain. Residues 36–44 (ISRGAFGKV) and K57 contribute to the ATP site. The active-site Proton acceptor is the D151. Disordered stretches follow at residues 310 to 345 (SPRLEKDVKQTEDEMCSTGTSNSRPPLPSSREVLNS) and 706 to 732 (ITPLQKTPRQGDAGTPYRTPKSVRRGA). Basic and acidic residues predominate over residues 312–321 (RLEKDVKQTE). T743 is subject to Phosphothreonine; by CDK1. The AGC-kinase C-terminal domain occupies 838–881 (HGVDWDNLQNQPMPFIPQPDDETDTSYFEARNNAQHLTVSGFSL).

It belongs to the protein kinase superfamily. AGC Ser/Thr protein kinase family. Phosphorylation at Thr-743 by CDK1 during M phase activates its kinase activity. Maximum phosphorylation occurs in prometaphase.

The protein localises to the cytoplasm. It localises to the cytoskeleton. The protein resides in the microtubule organizing center. Its subcellular location is the centrosome. It is found in the nucleus. The catalysed reaction is L-seryl-[protein] + ATP = O-phospho-L-seryl-[protein] + ADP + H(+). It carries out the reaction L-threonyl-[protein] + ATP = O-phospho-L-threonyl-[protein] + ADP + H(+). Its function is as follows. Serine/threonine kinase that plays a key role in M phase by acting as a regulator of mitosis entry and maintenance. Acts by promoting the inactivation of protein phosphatase 2A (PP2A) during M phase: does not directly inhibit PP2A but acts by mediating phosphorylation and subsequent activation of ARPP19 and ENSA at 'Ser-62' and 'Ser-67', respectively. ARPP19 and ENSA are phosphatase inhibitors that specifically inhibit the PPP2R2D (PR55-delta) subunit of PP2A. Inactivation of PP2A during M phase is essential to keep cyclin-B1-CDK1 activity high. Following DNA damage, it is also involved in checkpoint recovery by being inhibited. The sequence is that of Serine/threonine-protein kinase greatwall (MASTL) from Gallus gallus (Chicken).